The following is a 372-amino-acid chain: NAD(P)H-quinone oxidoreductase subunit 1 (372 aa).

Transmembrane regions (helical) follow at residues 29 to 49 (WIPLPSFLMIIGATVGVLVVV), 97 to 117 (WLFTLGPVLVVLPVFVSYLIV), 130 to 150 (VGIFLWISLSSIAPIGLLMSG), 176 to 196 (LAFSVLAIAMMSNSLSTIDIV), 204 to 224 (ILGWNVWRQPVGLIIFWIAAL), 254 to 274 (FGLFYVGSYVNLVLSALVFAI), 308 to 328 (SLGITMTVLKAYFLVFIAVLL), and 347 to 367 (FLLPVSLVNLLLTAALKLAFP).

The protein belongs to the complex I subunit 1 family. As to quaternary structure, NDH-1 is composed of at least 11 different subunits.

The protein localises to the cellular thylakoid membrane. It carries out the reaction a plastoquinone + NADH + (n+1) H(+)(in) = a plastoquinol + NAD(+) + n H(+)(out). It catalyses the reaction a plastoquinone + NADPH + (n+1) H(+)(in) = a plastoquinol + NADP(+) + n H(+)(out). In terms of biological role, NDH-1 shuttles electrons from an unknown electron donor, via FMN and iron-sulfur (Fe-S) centers, to quinones in the respiratory and/or the photosynthetic chain. The immediate electron acceptor for the enzyme in this species is believed to be plastoquinone. Couples the redox reaction to proton translocation, and thus conserves the redox energy in a proton gradient. In Rippkaea orientalis (strain PCC 8801 / RF-1) (Cyanothece sp. (strain PCC 8801)), this protein is NAD(P)H-quinone oxidoreductase subunit 1.